A 1025-amino-acid chain; its full sequence is Multidrug resistance protein MdtC (1025 aa).

The next 12 membrane-spanning stretches (helical) occupy residues 3–23 (FFALFIYRPVATILLSVAITL), 333–353 (EVEQTLIISVALVILVVFLFL), 360–380 (IIPAVAVPVSLIGTFAAMYLC), 387–407 (LSLMALTIATGFVVDDAIVVL), 431–451 (VGFTVLSMSLSLVAVFLPLLL), 463–483 (FAVTLSVAIGISLLVSLTLTP), 528–548 (LVGVVLLGTIALNIWLYISIP), 853–873 (VILIIAAIATVYIVLGILYES), 875–895 (VHPLTILSTLPSAGVGALLAL), 897–917 (LFNAPFSLIALIGIMLLIGIV), 953–973 (PIMMTTLAALFGALPLVLSGG), and 984–1004 (ITIVGGLVMSQLLTLYTTPVV).

This sequence belongs to the resistance-nodulation-cell division (RND) (TC 2.A.6) family. MdtC subfamily. In terms of assembly, part of a tripartite efflux system composed of MdtA, MdtB and MdtC. MdtC forms a heteromultimer with MdtB.

The protein localises to the cell inner membrane. The MdtABC tripartite complex confers resistance against novobiocin and deoxycholate. The protein is Multidrug resistance protein MdtC of Escherichia coli O1:K1 / APEC.